The sequence spans 81 residues: Defensin-like protein b (81 aa).

The N-terminal stretch at 1–26 (MRNATFFIVFYVFISLVLSNVQDVTA) is a signal peptide. Cystine bridges form between cysteine 31–cysteine 81, cysteine 42–cysteine 66, cysteine 50–cysteine 76, and cysteine 64–cysteine 78.

The protein belongs to the DEFL family. Expressed in microspores and in young and mature anthers.

The protein resides in the secreted. In terms of biological role, involved in self-incompatibility. The chain is Defensin-like protein b (SCRb-1) from Arabidopsis lyrata (Lyre-leaved rock-cress).